A 296-amino-acid chain; its full sequence is Probable endonuclease 4 (296 aa).

Residues histidine 68, histidine 109, glutamate 144, aspartate 178, histidine 181, histidine 213, aspartate 226, histidine 228, and glutamate 258 each coordinate Zn(2+).

This sequence belongs to the AP endonuclease 2 family. Zn(2+) serves as cofactor.

The catalysed reaction is Endonucleolytic cleavage to 5'-phosphooligonucleotide end-products.. Endonuclease IV plays a role in DNA repair. It cleaves phosphodiester bonds at apurinic or apyrimidinic (AP) sites, generating a 3'-hydroxyl group and a 5'-terminal sugar phosphate. This Staphylococcus carnosus (strain TM300) protein is Probable endonuclease 4.